Reading from the N-terminus, the 124-residue chain is Aspartate 1-decarboxylase (124 aa).

Residue Ser21 is the Schiff-base intermediate with substrate; via pyruvic acid of the active site. Ser21 is modified (pyruvic acid (Ser)). Thr53 serves as a coordination point for substrate. Residue Tyr54 is the Proton donor of the active site. 69–71 (GAA) lines the substrate pocket.

The protein belongs to the PanD family. In terms of assembly, heterooctamer of four alpha and four beta subunits. Requires pyruvate as cofactor. Is synthesized initially as an inactive proenzyme, which is activated by self-cleavage at a specific serine bond to produce a beta-subunit with a hydroxyl group at its C-terminus and an alpha-subunit with a pyruvoyl group at its N-terminus.

The protein resides in the cytoplasm. It carries out the reaction L-aspartate + H(+) = beta-alanine + CO2. It functions in the pathway cofactor biosynthesis; (R)-pantothenate biosynthesis; beta-alanine from L-aspartate: step 1/1. Its function is as follows. Catalyzes the pyruvoyl-dependent decarboxylation of aspartate to produce beta-alanine. This is Aspartate 1-decarboxylase from Dehalococcoides mccartyi (strain ATCC BAA-2266 / KCTC 15142 / 195) (Dehalococcoides ethenogenes (strain 195)).